The chain runs to 179 residues: Large ribosomal subunit protein uL5 (179 aa).

The protein belongs to the universal ribosomal protein uL5 family. Part of the 50S ribosomal subunit; part of the 5S rRNA/L5/L18/L25 subcomplex. Contacts the 5S rRNA and the P site tRNA. Forms a bridge to the 30S subunit in the 70S ribosome.

Its function is as follows. This is one of the proteins that bind and probably mediate the attachment of the 5S RNA into the large ribosomal subunit, where it forms part of the central protuberance. In the 70S ribosome it contacts protein S13 of the 30S subunit (bridge B1b), connecting the 2 subunits; this bridge is implicated in subunit movement. Contacts the P site tRNA; the 5S rRNA and some of its associated proteins might help stabilize positioning of ribosome-bound tRNAs. The protein is Large ribosomal subunit protein uL5 of Salmonella agona (strain SL483).